A 71-amino-acid chain; its full sequence is Translation initiation factor IF-1 (71 aa).

The 71-residue stretch at 1-71 (MAKQAAIEQD…LTKARITYRY (71 aa)) folds into the S1-like domain.

The protein belongs to the IF-1 family. Component of the 30S ribosomal translation pre-initiation complex which assembles on the 30S ribosome in the order IF-2 and IF-3, IF-1 and N-formylmethionyl-tRNA(fMet); mRNA recruitment can occur at any time during PIC assembly.

It localises to the cytoplasm. Its function is as follows. One of the essential components for the initiation of protein synthesis. Stabilizes the binding of IF-2 and IF-3 on the 30S subunit to which N-formylmethionyl-tRNA(fMet) subsequently binds. Helps modulate mRNA selection, yielding the 30S pre-initiation complex (PIC). Upon addition of the 50S ribosomal subunit IF-1, IF-2 and IF-3 are released leaving the mature 70S translation initiation complex. This Christiangramia forsetii (strain DSM 17595 / CGMCC 1.15422 / KT0803) (Gramella forsetii) protein is Translation initiation factor IF-1.